The following is a 263-amino-acid chain: Lens fiber major intrinsic protein (263 aa).

At 1-9 (MWEFRSFSF) the chain is on the cytoplasmic side. Residues 10 to 29 (WRAVFAEFFGTMFYVFFGLG) traverse the membrane as a helical segment. Residues 30-41 (ASLKWAAGPANV) are Extracellular-facing. The helical transmembrane segment at 42-59 (LVIALAFGLVLATMVQSI) threads the bilayer. At 60 to 61 (GH) the chain is on the cytoplasmic side. Residues 62–77 (VSGAHINPAVTFAFLI) constitute an intramembrane region (discontinuously helical). The short motif at 68–70 (NPA) is the NPA 1 element. At 78 to 82 (GSQMS) the chain is on the cytoplasmic side. The helical transmembrane segment at 83–106 (LFRAIFYIAAQLLGAVAGAAVLYG) threads the bilayer. The Extracellular segment spans residues 107–127 (VTPAAIRGNLALNTLHPGVSL). Residues 128–148 (GQATTVEIFLTLQFVLCIFAT) form a helical membrane-spanning segment. The Cytoplasmic portion of the chain corresponds to 149 to 156 (YDERRNGR). A helical transmembrane segment spans residues 157 to 175 (LGSVSLAIGFSLTLGHLFG). Over 176-178 (LYY) the chain is Extracellular. The discontinuously helical intramembrane region spans 179-193 (TGASMNPARSFAPAV). Positions 184 to 186 (NPA) match the NPA 2 motif. Residues 194–200 (LTRNFTN) lie on the Extracellular side of the membrane. The chain crosses the membrane as a helical span at residues 201 to 222 (HWVYWVGPIIGGALGGLVYDFI). At 223–263 (LFPRMRGLSERLSILKGARPAEPEGQQEATGEPIELKTQSL) the chain is on the cytoplasmic side. An interaction with CALM region spans residues 227 to 237 (MRGLSERLSIL). Residues 241-263 (RPAEPEGQQEATGEPIELKTQSL) form a disordered region.

The protein belongs to the MIP/aquaporin (TC 1.A.8) family. In terms of assembly, homotetramer; each monomer provides an independent water pore. Two homotetramers on opposing membranes can dimerize, forming a cell-cell junction. Interacts with CALM; the calcium-calmodulin/CALM complex interacts with the cytoplasmic domains of two aquaporins, leading to channel closure.

The protein resides in the cell membrane. It is found in the cell junction. The catalysed reaction is H2O(in) = H2O(out). The water channel activity is inhibited by calcium through calmodulin/CALM. Aquaporins form homotetrameric transmembrane channels, with each monomer independently mediating water transport across the plasma membrane along its osmotic gradient. Specifically expressed in lens fiber cells, this aquaporin is crucial for maintaining lens water homeostasis and transparency. Beyond water permeability, it also acts as a cell-to-cell adhesion molecule, forming thin junctions between lens fiber cells that are essential for maintaining the ordered structure and transparency of the lens. This is Lens fiber major intrinsic protein from Lithobates pipiens (Northern leopard frog).